Consider the following 107-residue polypeptide: Cytochrome c-550 (107 aa).

Heme c is bound by residues C11, C14, H15, and M80.

Binds 1 heme c group covalently per subunit.

The chain is Cytochrome c-550 from Ancylobacter novellus (Thiobacillus novellus).